Reading from the N-terminus, the 406-residue chain is Biofilm regulatory protein A (406 aa).

The first 26 residues, 1–26 (MKIGKKILIMLVTIFLTSLVALGVYA), serve as a signal peptide directing secretion. Positions 347 to 397 (SSSASDYSSSGNYSGSSSDYGSSSSYGSNSSSGSSSDYSGQNSYNQGNYQQ) are enriched in low complexity. The interval 347–406 (SSSASDYSSSGNYSGSSSDYGSSSSYGSNSSSGSSSDYSGQNSYNQGNYQQPAAGTGIGN) is disordered.

This sequence belongs to the LytR/CpsA/Psr (LCP) family.

It is found in the cell envelope. In terms of biological role, involved in biofilm formation, cell division, autolysis and the regulation of acid and oxidative stress tolerance. May be associated with systemic virulence in blood. The protein is Biofilm regulatory protein A (brpA) of Streptococcus mutans serotype c (strain ATCC 700610 / UA159).